A 203-amino-acid polypeptide reads, in one-letter code: Nucleoside triphosphate pyrophosphatase (203 aa).

The active-site Proton acceptor is the aspartate 77.

This sequence belongs to the Maf family. Requires a divalent metal cation as cofactor.

It is found in the cytoplasm. The catalysed reaction is a ribonucleoside 5'-triphosphate + H2O = a ribonucleoside 5'-phosphate + diphosphate + H(+). The enzyme catalyses a 2'-deoxyribonucleoside 5'-triphosphate + H2O = a 2'-deoxyribonucleoside 5'-phosphate + diphosphate + H(+). Its function is as follows. Nucleoside triphosphate pyrophosphatase. May have a dual role in cell division arrest and in preventing the incorporation of modified nucleotides into cellular nucleic acids. This is Nucleoside triphosphate pyrophosphatase from Rickettsia felis (strain ATCC VR-1525 / URRWXCal2) (Rickettsia azadi).